We begin with the raw amino-acid sequence, 732 residues long: Myosin heavy chain kinase B (732 aa).

The region spanning D124–I328 is the Alpha-type protein kinase domain. Position 298–303 (G298–G303) interacts with ATP. Residues K331–S428 are disordered. The span at N356 to G394 shows a compositional bias: low complexity. Positions S395–P404 are enriched in basic and acidic residues. Residues S405–T419 show a composition bias toward polar residues. WD repeat units follow at residues K458–D486, G500–D528, G540–D568, S580–D608, G620–N648, G660–D688, and G700–G730.

This sequence belongs to the protein kinase superfamily. Alpha-type protein kinase family. ALPK subfamily.

The enzyme catalyses L-threonyl-[myosin heavy-chain] + ATP = O-phospho-L-threonyl-[myosin heavy-chain] + ADP + H(+). In terms of biological role, catalyzes its autophosphorylation, which is needed for enzymatic activity and phosphorylates myosin II heavy chain at a threonine in the C-terminal tail region. This phosphorylation is critical in regulating the assembly and disassembly of myosin II filament. Participates in control of myosin localization. This chain is Myosin heavy chain kinase B (mhkB), found in Dictyostelium discoideum (Social amoeba).